Here is a 136-residue protein sequence, read N- to C-terminus: MSKLNKSIIAEFESAQITRQVPQFSQGDTIVVNVKVKEGNRERLQAYEGVVIATKNAGLNSAFTVRKISHGYGVERVFQTHSPIIESIEIKRRGKVRAAKLYYLRGLEGKAARIKEDLAATAQEKLARKTVTAKAG.

It belongs to the bacterial ribosomal protein bL19 family.

This protein is located at the 30S-50S ribosomal subunit interface and may play a role in the structure and function of the aminoacyl-tRNA binding site. The chain is Large ribosomal subunit protein bL19 from Xylella fastidiosa (strain 9a5c).